The following is a 215-amino-acid chain: Interleukin-12 subunit alpha (215 aa).

Residues 1 to 22 (MCQSRYLLFLATLALLNHLSLA) form the signal peptide. 3 disulfide bridges follow: cysteine 33–cysteine 106, cysteine 60–cysteine 192, and cysteine 81–cysteine 119. The N-linked (GlcNAc...) asparagine glycan is linked to asparagine 89.

Belongs to the IL-6 superfamily. Heterodimer with IL12B; disulfide-linked. This heterodimer is known as interleukin IL-12. Heterodimer with EBI3/IL27B; not disulfide-linked. This heterodimer is known as interleukin IL-35. Interacts with NBR1; this interaction promotes IL-12 secretion.

Its subcellular location is the secreted. In terms of biological role, heterodimerizes with IL12B to form the IL-12 cytokine or with EBI3/IL27B to form the IL-35 cytokine. IL-12 is primarily produced by professional antigen-presenting cells (APCs) such as B-cells and dendritic cells (DCs) as well as macrophages and granulocytes and regulates T-cell and natural killer-cell responses, induces the production of interferon-gamma (IFN-gamma), favors the differentiation of T-helper 1 (Th1) cells and is an important link between innate resistance and adaptive immunity. Mechanistically, exerts its biological effects through a receptor composed of IL12R1 and IL12R2 subunits. Binding to the receptor results in the rapid tyrosine phosphorylation of a number of cellular substrates including the JAK family kinases TYK2 and JAK2. In turn, recruited STAT4 gets phosphorylated and translocates to the nucleus where it regulates cytokine/growth factor responsive genes. As part of IL-35, plays essential roles in maintaining the immune homeostasis of the liver microenvironment and also functions as an immune-suppressive cytokine. Mediates biological events through unconventional receptors composed of IL12RB2 and gp130/IL6ST heterodimers or homodimers. Signaling requires the transcription factors STAT1 and STAT4, which form a unique heterodimer that binds to distinct DNA sites. In Mus musculus (Mouse), this protein is Interleukin-12 subunit alpha (Il12a).